The primary structure comprises 900 residues: Isoleucine--tRNA ligase (900 aa).

The short motif at Pro-58 to His-68 is the 'HIGH' region element. Glu-552 serves as a coordination point for L-isoleucyl-5'-AMP. Positions Lys-593–Ser-597 match the 'KMSKS' region motif. Lys-596 contacts ATP.

Belongs to the class-I aminoacyl-tRNA synthetase family. IleS type 1 subfamily. Monomer.

It is found in the cytoplasm. The enzyme catalyses tRNA(Ile) + L-isoleucine + ATP = L-isoleucyl-tRNA(Ile) + AMP + diphosphate. Its function is as follows. Catalyzes the attachment of isoleucine to tRNA(Ile). As IleRS can inadvertently accommodate and process structurally similar amino acids such as valine, to avoid such errors it has two additional distinct tRNA(Ile)-dependent editing activities. One activity is designated as 'pretransfer' editing and involves the hydrolysis of activated Val-AMP. The other activity is designated 'posttransfer' editing and involves deacylation of mischarged Val-tRNA(Ile). The chain is Isoleucine--tRNA ligase from Ureaplasma parvum serovar 3 (strain ATCC 700970).